Consider the following 552-residue polypeptide: Arginine--tRNA ligase (552 aa).

Positions 130–140 (ANPTGPIHLGG) match the 'HIGH' region motif.

It belongs to the class-I aminoacyl-tRNA synthetase family. In terms of assembly, monomer.

Its subcellular location is the cytoplasm. The enzyme catalyses tRNA(Arg) + L-arginine + ATP = L-arginyl-tRNA(Arg) + AMP + diphosphate. This Nocardia farcinica (strain IFM 10152) protein is Arginine--tRNA ligase.